The following is a 74-amino-acid chain: Exodeoxyribonuclease 7 small subunit (74 aa).

It belongs to the XseB family. In terms of assembly, heterooligomer composed of large and small subunits.

It is found in the cytoplasm. It carries out the reaction Exonucleolytic cleavage in either 5'- to 3'- or 3'- to 5'-direction to yield nucleoside 5'-phosphates.. In terms of biological role, bidirectionally degrades single-stranded DNA into large acid-insoluble oligonucleotides, which are then degraded further into small acid-soluble oligonucleotides. In Neisseria meningitidis serogroup A / serotype 4A (strain DSM 15465 / Z2491), this protein is Exodeoxyribonuclease 7 small subunit.